Consider the following 326-residue polypeptide: 5-dehydro-2-deoxygluconokinase (326 aa).

The protein belongs to the carbohydrate kinase PfkB family.

The enzyme catalyses 5-dehydro-2-deoxy-D-gluconate + ATP = 6-phospho-5-dehydro-2-deoxy-D-gluconate + ADP + H(+). The protein operates within polyol metabolism; myo-inositol degradation into acetyl-CoA; acetyl-CoA from myo-inositol: step 5/7. Catalyzes the phosphorylation of 5-dehydro-2-deoxy-D-gluconate (2-deoxy-5-keto-D-gluconate or DKG) to 6-phospho-5-dehydro-2-deoxy-D-gluconate (DKGP). This is 5-dehydro-2-deoxygluconokinase from Lacticaseibacillus casei (Lactobacillus casei).